A 216-amino-acid polypeptide reads, in one-letter code: Large ribosomal subunit protein uL3 (216 aa).

The disordered stretch occupies residues 136 to 155; sequence GVSISHRSHGSTGQRQDPGK. Residue Gln151 is modified to N5-methylglutamine.

This sequence belongs to the universal ribosomal protein uL3 family. As to quaternary structure, part of the 50S ribosomal subunit. Forms a cluster with proteins L14 and L19. In terms of processing, methylated by PrmB.

One of the primary rRNA binding proteins, it binds directly near the 3'-end of the 23S rRNA, where it nucleates assembly of the 50S subunit. In Rickettsia prowazekii (strain Madrid E), this protein is Large ribosomal subunit protein uL3.